Here is a 387-residue protein sequence, read N- to C-terminus: MLRHNVPVRRDLDQIAADNGFDFHIIDNEIYWDESRAYRFTLRQIEEQIEKPTAELHQMCLEVVDRAVKDEEILTQLAIPPLYWDVIAESWRARDPSLYGRMDFAWCGNAPVKLLEYNADTPTSLYESAYFQWLWLEDARRSGIIPRDADQYNAIQERLISRFSELYSREPFYFCCCQDTDEDRSTVLYLQDCAQQAGQESRFIYIEDLGLGVGGVLTDLDDNVIQRAFKLYPLEWMMRDDNGPLLRKRREQWVEPLWKSILSNKGLMPLLWRFFPGHPNLLASWFDGEKPQIAAGESYVRKPIYSREGGNVTIFDGKNNVVDHADGDYADEPMIYQAFQPLPRFGDSYTLIGSWIVDDEACGMGIREDNTLITKDTSRFVPHYIAG.

Residue 101 to 103 (RMD) participates in ATP binding. The Mg(2+) site is built by Asp-103, Glu-116, and Asn-118. ATP is bound by residues Lys-265, Lys-302, Gly-309, Gln-337, and 372–374 (LIT).

It belongs to the glutathionylspermidine synthase preATP-grasp family.

Its function is as follows. May be a ligase forming an amide bond. Shows ATPase activity. Despite its similarity to the C-terminal synthetase domain of Gss, is not a glutathionylspermidine (Gsp) synthetase. Cannot synthesize Gsp, glutathione (GSH), or GSH intermediates, from GSH and spermidine, cysteine and glutamate, gamma-glutamylcysteine and spermidine, and gamma-glutamylcysteine and glycine. Does not bind to Gsp. The protein is Putative acid--amine ligase YjfC (yjfC) of Escherichia coli (strain K12).